Reading from the N-terminus, the 478-residue chain is uncharacterized protein (478 aa).

The signal sequence occupies residues 1–19 (MKLFPLCLSALVMSTATCA). Over 20 to 214 (SSVEGAIEKV…VPVTLKLQRQ (195 aa)) the chain is Lumenal. The helical transmembrane segment at 215-235 (IFLSFSIVYGLISLWWAIRCI) threads the bilayer. Over 236–240 (CSRTK) the chain is Cytoplasmic. The chain crosses the membrane as a helical span at residues 241–261 (LHLVQVCLFCWFSFFILNHPV). At 262 to 289 (KQRIFSIDNPDEYLVPFVVSCFTYFLGD) the chain is on the lumenal side. Residues 290–310 (GIEYALYSLFITTTVLGFGTI) traverse the membrane as a helical segment. Topologically, residues 311 to 317 (RRTSKKM) are cytoplasmic. The chain crosses the membrane as a helical span at residues 318–338 (VLFFSLLTCGQAFLVNVAPMV). Residues 339–356 (YPLLYISGSDKACVLRMV) are Lumenal-facing. Residues 357–377 (WVFNKFLYLPLITFLGAVLAF) form a helical membrane-spanning segment. Topologically, residues 378 to 391 (RFRLKKASQFDTRW) are cytoplasmic. Residues 392 to 412 (NLFALTLAIIILFAFNDLVIF) traverse the membrane as a helical segment. At 413–427 (DKLQKLWKYDDTTLE) the chain is on the lumenal side. A helical membrane pass occupies residues 428–448 (YLKIVNGGIKFVAFSILLGPY). The Cytoplasmic portion of the chain corresponds to 449–478 (SKLFAEPKSLQLDDFLGKHDGHKDPSLEKF).

The protein resides in the endoplasmic reticulum membrane. It is found in the golgi apparatus membrane. This is an uncharacterized protein from Schizosaccharomyces pombe (strain 972 / ATCC 24843) (Fission yeast).